The primary structure comprises 417 residues: Glucose-1-phosphate adenylyltransferase (417 aa).

Alpha-D-glucose 1-phosphate is bound by residues tyrosine 98, glycine 163, 178 to 179, and serine 197; that span reads EK.

It belongs to the bacterial/plant glucose-1-phosphate adenylyltransferase family. As to quaternary structure, homotetramer.

It carries out the reaction alpha-D-glucose 1-phosphate + ATP + H(+) = ADP-alpha-D-glucose + diphosphate. It participates in glycan biosynthesis; glycogen biosynthesis. Its function is as follows. Involved in the biosynthesis of ADP-glucose, a building block required for the elongation reactions to produce glycogen. Catalyzes the reaction between ATP and alpha-D-glucose 1-phosphate (G1P) to produce pyrophosphate and ADP-Glc. The polypeptide is Glucose-1-phosphate adenylyltransferase (Koribacter versatilis (strain Ellin345)).